An 82-amino-acid polypeptide reads, in one-letter code: Delta-actitoxin-Aeq2a (82 aa).

Positions 1–19 (MNRLMILVFAAVFLALASA) are cleaved as a signal peptide. The propeptide occupies 20 to 26 (DEDVDIA). 3 disulfide bridges follow: C32-C79, C34-C69, and C62-C80.

This sequence belongs to the sea anemone sodium channel inhibitory toxin family. Type I subfamily.

It is found in the secreted. The protein localises to the nematocyst. Its function is as follows. Binds specifically to voltage-gated sodium channels (Nav), thereby delaying their inactivation during signal transduction. Causes death to crabs (minimum lethal dose of 25 ug/kg) and mice. This chain is Delta-actitoxin-Aeq2a, found in Actinia equina (Beadlet anemone).